We begin with the raw amino-acid sequence, 306 residues long: Protein-methionine-sulfoxide reductase catalytic subunit MsrP (306 aa).

The segment at residues 1–44 (MLIRHAPDLTDNDVTGHGLYLRRRDFIGGAAGLGLMAAAGSASA) is a signal peptide (tat-type signal). Mo-molybdopterin contacts are provided by residues asparagine 69, 72–73 (YE), cysteine 127, threonine 162, asparagine 210, arginine 215, and 226–228 (GIK).

It belongs to the MsrP family. Heterodimer of a catalytic subunit (MsrP) and a heme-binding subunit (MsrQ). Mo-molybdopterin serves as cofactor. Post-translationally, predicted to be exported by the Tat system. The position of the signal peptide cleavage has not been experimentally proven.

Its subcellular location is the periplasm. It carries out the reaction L-methionyl-[protein] + a quinone + H2O = L-methionyl-(S)-S-oxide-[protein] + a quinol. The catalysed reaction is L-methionyl-[protein] + a quinone + H2O = L-methionyl-(R)-S-oxide-[protein] + a quinol. Its function is as follows. Part of the MsrPQ system that repairs oxidized periplasmic proteins containing methionine sulfoxide residues (Met-O), using respiratory chain electrons. Thus protects these proteins from oxidative-stress damage caused by reactive species of oxygen and chlorine generated by the host defense mechanisms. MsrPQ is essential for the maintenance of envelope integrity under bleach stress, rescuing a wide series of structurally unrelated periplasmic proteins from methionine oxidation. The catalytic subunit MsrP is non-stereospecific, being able to reduce both (R-) and (S-) diastereoisomers of methionine sulfoxide. This is Protein-methionine-sulfoxide reductase catalytic subunit MsrP from Caulobacter sp. (strain K31).